We begin with the raw amino-acid sequence, 520 residues long: ATP-dependent RNA helicase CshA (520 aa).

Residues 2-30 carry the Q motif motif; the sequence is TKFSEFGLDEKIVKSVNRMGFEEATPIQE. The 171-residue stretch at 33 to 203 folds into the Helicase ATP-binding domain; sequence IPLGLEGKDL…ERFMHSPELI (171 aa). An ATP-binding site is contributed by 46–53; the sequence is AQTGTGKT. The short motif at 151 to 154 is the DEAD box element; the sequence is DEAD. In terms of domain architecture, Helicase C-terminal spans 214–374; it reads LIEQFFVKVH…PLQAPTWDEA (161 aa). Residues 428 to 439 show a composition bias toward basic and acidic residues; that stretch reads KTPVHITEERPL. Positions 428–520 are disordered; that stretch reads KTPVHITEER…NKGNYSQKSK (93 aa). 2 stretches are compositionally biased toward gly residues: residues 442–468 and 482–496; these read RGGGGYKGKNGKGGKGGGYRGGSGKGG and SGGGSGGGSGSGGGG.

The protein belongs to the DEAD box helicase family. CshA subfamily. As to quaternary structure, oligomerizes, may be a member of the RNA degradosome.

The protein localises to the cytoplasm. The enzyme catalyses ATP + H2O = ADP + phosphate + H(+). Its function is as follows. DEAD-box RNA helicase possibly involved in RNA degradation. Unwinds dsRNA in both 5'- and 3'-directions, has RNA-dependent ATPase activity. Involved in cold tolerance, motility and alcohol tolerance. The sequence is that of ATP-dependent RNA helicase CshA from Listeria monocytogenes serovar 1/2a (strain ATCC BAA-679 / EGD-e).